The sequence spans 555 residues: Pyrophosphate--fructose 6-phosphate 1-phosphotransferase (555 aa).

Gly-82 serves as a coordination point for diphosphate. A substrate-binding site is contributed by Arg-146. Asp-176 is a binding site for Mg(2+). Substrate contacts are provided by residues 204–206, 243–244, 251–253, Glu-312, and 428–431; these read TID, KY, MGR, and YEGR. Asp-206 acts as the Proton acceptor in catalysis.

The protein belongs to the phosphofructokinase type A (PFKA) family. PPi-dependent PFK group II subfamily. Clade 'Long' sub-subfamily. Homodimer. It depends on Mg(2+) as a cofactor.

It is found in the cytoplasm. It catalyses the reaction beta-D-fructose 6-phosphate + diphosphate = beta-D-fructose 1,6-bisphosphate + phosphate + H(+). The protein operates within carbohydrate degradation; glycolysis; D-glyceraldehyde 3-phosphate and glycerone phosphate from D-glucose: step 3/4. With respect to regulation, non-allosteric. In terms of biological role, catalyzes the phosphorylation of D-fructose 6-phosphate, the first committing step of glycolysis. Uses inorganic phosphate (PPi) as phosphoryl donor instead of ATP like common ATP-dependent phosphofructokinases (ATP-PFKs), which renders the reaction reversible, and can thus function both in glycolysis and gluconeogenesis. Consistently, PPi-PFK can replace the enzymes of both the forward (ATP-PFK) and reverse (fructose-bisphosphatase (FBPase)) reactions. In Borreliella burgdorferi (strain ATCC 35210 / DSM 4680 / CIP 102532 / B31) (Borrelia burgdorferi), this protein is Pyrophosphate--fructose 6-phosphate 1-phosphotransferase.